We begin with the raw amino-acid sequence, 144 residues long: 6,7-dimethyl-8-ribityllumazine synthase (144 aa).

Residues Phe-21, Ala-56 to Glu-58, and Ala-80 to Ile-82 contribute to the 5-amino-6-(D-ribitylamino)uracil site. Gly-85–Thr-86 is a binding site for (2S)-2-hydroxy-3-oxobutyl phosphate. His-88 acts as the Proton donor in catalysis. Phe-113 serves as a coordination point for 5-amino-6-(D-ribitylamino)uracil. Arg-127 contributes to the (2S)-2-hydroxy-3-oxobutyl phosphate binding site.

This sequence belongs to the DMRL synthase family. As to quaternary structure, forms an icosahedral capsid composed of 60 subunits, arranged as a dodecamer of pentamers.

It catalyses the reaction (2S)-2-hydroxy-3-oxobutyl phosphate + 5-amino-6-(D-ribitylamino)uracil = 6,7-dimethyl-8-(1-D-ribityl)lumazine + phosphate + 2 H2O + H(+). The protein operates within cofactor biosynthesis; riboflavin biosynthesis; riboflavin from 2-hydroxy-3-oxobutyl phosphate and 5-amino-6-(D-ribitylamino)uracil: step 1/2. Its function is as follows. Catalyzes the formation of 6,7-dimethyl-8-ribityllumazine by condensation of 5-amino-6-(D-ribitylamino)uracil with 3,4-dihydroxy-2-butanone 4-phosphate. This is the penultimate step in the biosynthesis of riboflavin. The sequence is that of 6,7-dimethyl-8-ribityllumazine synthase (ribH) from Photobacterium leiognathi.